A 345-amino-acid polypeptide reads, in one-letter code: S-adenosylmethionine:tRNA ribosyltransferase-isomerase (345 aa).

It belongs to the QueA family. Monomer.

The protein localises to the cytoplasm. It carries out the reaction 7-aminomethyl-7-carbaguanosine(34) in tRNA + S-adenosyl-L-methionine = epoxyqueuosine(34) in tRNA + adenine + L-methionine + 2 H(+). The protein operates within tRNA modification; tRNA-queuosine biosynthesis. Its function is as follows. Transfers and isomerizes the ribose moiety from AdoMet to the 7-aminomethyl group of 7-deazaguanine (preQ1-tRNA) to give epoxyqueuosine (oQ-tRNA). The polypeptide is S-adenosylmethionine:tRNA ribosyltransferase-isomerase (Finegoldia magna (strain ATCC 29328 / DSM 20472 / WAL 2508) (Peptostreptococcus magnus)).